The primary structure comprises 239 residues: Ribonuclease 3 (239 aa).

One can recognise an RNase III domain in the interval 12–137 (RAKLEGLIGH…LIAAIYLDGG (126 aa)). Glutamate 50 contributes to the Mg(2+) binding site. Residue aspartate 54 is part of the active site. Mg(2+) contacts are provided by aspartate 123 and glutamate 126. Residue glutamate 126 is part of the active site. Positions 162-231 (DAKTELQEWS…ATKMLEREGI (70 aa)) constitute a DRBM domain.

It belongs to the ribonuclease III family. In terms of assembly, homodimer. The cofactor is Mg(2+).

It is found in the cytoplasm. It carries out the reaction Endonucleolytic cleavage to 5'-phosphomonoester.. Its function is as follows. Digests double-stranded RNA. Involved in the processing of primary rRNA transcript to yield the immediate precursors to the large and small rRNAs (23S and 16S). Processes some mRNAs, and tRNAs when they are encoded in the rRNA operon. Processes pre-crRNA and tracrRNA of type II CRISPR loci if present in the organism. The polypeptide is Ribonuclease 3 (Rhizobium leguminosarum bv. trifolii (strain WSM2304)).